The sequence spans 110 residues: MDGTLFPGDDDLAIPATEFFSTKADKKPEAKREAIVKADEDDNEETLKQRLTNLEKKITNVTTKFEQIEKCCKRNDEVLFRLENHAETLRAAMISLAKKIDVQTGRRPYE.

It belongs to the orthopoxvirus OPG154 protein family. Homohexamers, covalently linked. Interacts with OPG144 and OPG153.

The protein resides in the virion. In terms of biological role, structural protein involved in the envelopment of mature virion (MV) to form the wrapped virion (WV). The wrapping consists of the addition of Golgi membranes to the mature virion. Participates in mature virion (MV) movement within the infected cell. May play an indirect role in MV-cell fusion. The chain is Protein OPG154 (OPG154) from Homo sapiens (Human).